We begin with the raw amino-acid sequence, 602 residues long: Elongation factor 4 (602 aa).

One can recognise a tr-type G domain in the interval N2 to K184. GTP contacts are provided by residues D14 to T19 and N131 to D134.

The protein belongs to the TRAFAC class translation factor GTPase superfamily. Classic translation factor GTPase family. LepA subfamily.

The protein localises to the cell inner membrane. It carries out the reaction GTP + H2O = GDP + phosphate + H(+). Its function is as follows. Required for accurate and efficient protein synthesis under certain stress conditions. May act as a fidelity factor of the translation reaction, by catalyzing a one-codon backward translocation of tRNAs on improperly translocated ribosomes. Back-translocation proceeds from a post-translocation (POST) complex to a pre-translocation (PRE) complex, thus giving elongation factor G a second chance to translocate the tRNAs correctly. Binds to ribosomes in a GTP-dependent manner. This chain is Elongation factor 4, found in Delftia acidovorans (strain DSM 14801 / SPH-1).